The primary structure comprises 128 residues: MLWKSVLPVALIVLGIHDCSFKFIEIDKNEEEFAMSMEHVLFHFNENQNDDFAYKFLRVRRSLRKKYTQKYLVDLEMGRTLCGKYDEDIDNCPLQEGPGEKKVRCTYIVETRVWVTEFTILNSTCVQT.

Residues 1-21 (MLWKSVLPVALIVLGIHDCSF) form the signal peptide. Intrachain disulfides connect Cys-82-Cys-92 and Cys-105-Cys-125. A glycan (N-linked (GlcNAc...) asparagine) is linked at Asn-122.

The protein belongs to the cystatin family.

The protein resides in the secreted. Its function is as follows. May play a specialized role in spermatogenesis. This chain is Cystatin-12 (Cst12), found in Rattus norvegicus (Rat).